The sequence spans 108 residues: Ig kappa chain V region GOM (108 aa).

The segment at 1–23 (DIVMTQTPLSLSVSPGEPASISC) is framework-1. An intrachain disulfide couples cysteine 23 to cysteine 88. The complementarity-determining-1 stretch occupies residues 24-34 (RSSQSNLDYLN). Residues 35 to 49 (WYLQKAGQSPRLLPE) are framework-2. A disordered region spans residues 44–66 (PRLLPEQDSQRASGVPDRFSGSG). Residues 50-56 (QDSQRAS) form a complementarity-determining-2 region. The segment at 57-88 (GVPDRFSGSGSGTDFTLRIGRVEAEDAGIYYC) is framework-3. Positions 89–97 (MQRSFYPYT) are complementarity-determining-3. Residues 98–107 (FGQGTRLEVR) are framework-4.

In Canis lupus familiaris (Dog), this protein is Ig kappa chain V region GOM.